The chain runs to 267 residues: Indole-3-glycerol phosphate synthase (267 aa).

It belongs to the TrpC family.

It catalyses the reaction 1-(2-carboxyphenylamino)-1-deoxy-D-ribulose 5-phosphate + H(+) = (1S,2R)-1-C-(indol-3-yl)glycerol 3-phosphate + CO2 + H2O. It functions in the pathway amino-acid biosynthesis; L-tryptophan biosynthesis; L-tryptophan from chorismate: step 4/5. This chain is Indole-3-glycerol phosphate synthase, found in Dichelobacter nodosus (strain VCS1703A).